The primary structure comprises 89 residues: Large ribosomal subunit protein bL27 (89 aa).

The disordered stretch occupies residues 1–22 (MAQKKAGGSSRNGRDSAGRRLG).

It belongs to the bacterial ribosomal protein bL27 family.

This is Large ribosomal subunit protein bL27 from Gluconacetobacter diazotrophicus (strain ATCC 49037 / DSM 5601 / CCUG 37298 / CIP 103539 / LMG 7603 / PAl5).